The primary structure comprises 587 residues: tRNA (guanine(37)-N(1))-methyltransferase 2 (587 aa).

S-adenosyl-L-methionine contacts are provided by residues R360 and 430-431 (DA). Residues 446–469 (ASTRSRKEDVTNKDGNHVTPTEPM) form a disordered region. Basic and acidic residues predominate over residues 450–461 (SRKEDVTNKDGN). N478 serves as a coordination point for S-adenosyl-L-methionine.

The protein belongs to the class I-like SAM-binding methyltransferase superfamily. TRM5/TYW2 family. Monomer.

The protein resides in the mitochondrion matrix. Its subcellular location is the nucleus. It localises to the cytoplasm. It carries out the reaction guanosine(37) in tRNA + S-adenosyl-L-methionine = N(1)-methylguanosine(37) in tRNA + S-adenosyl-L-homocysteine + H(+). Functionally, specifically methylates the N1 position of guanosine-37 in various cytoplasmic and mitochondrial tRNAs. Methylation is not dependent on the nature of the nucleoside 5' of the target nucleoside. This is the first step in the biosynthesis of wybutosine (yW), a modified base adjacent to the anticodon of tRNAs and required for accurate decoding. The chain is tRNA (guanine(37)-N(1))-methyltransferase 2 from Phaeodactylum tricornutum (strain CCAP 1055/1).